Reading from the N-terminus, the 265-residue chain is Phosphate import ATP-binding protein PstB 1 (265 aa).

The ABC transporter domain occupies 20-260 (LSTNDLSVLY…PKGKITEDYI (241 aa)). 53–60 (GASGSGKS) lines the ATP pocket.

This sequence belongs to the ABC transporter superfamily. Phosphate importer (TC 3.A.1.7) family. In terms of assembly, the complex is composed of two ATP-binding proteins (PstB), two transmembrane proteins (PstC and PstA) and a solute-binding protein (PstS).

The protein resides in the cell membrane. The enzyme catalyses phosphate(out) + ATP + H2O = ADP + 2 phosphate(in) + H(+). Its function is as follows. Part of the ABC transporter complex PstSACB involved in phosphate import. Responsible for energy coupling to the transport system. The chain is Phosphate import ATP-binding protein PstB 1 from Lactobacillus acidophilus (strain ATCC 700396 / NCK56 / N2 / NCFM).